Consider the following 221-residue polypeptide: Placenta growth factor (221 aa).

The N-terminal stretch at M1 to A18 is a signal peptide. N33 carries N-linked (GlcNAc...) asparagine glycosylation. 3 disulfide bridges follow: C52–C94, C83–C128, and C87–C130. N101 carries an N-linked (GlcNAc...) asparagine glycan. Positions Q175–R221 are disordered. Basic residues predominate over residues H192–K203. The segment at P193–R213 is heparin-binding. Residues P204 to R221 show a composition bias toward basic and acidic residues.

The protein belongs to the PDGF/VEGF growth factor family. Antiparallel homodimer; disulfide-linked. Also found as heterodimer with VEGFA/VEGF. Isoform PlGF-3 is found both as homodimer and as monomer. Post-translationally, N-glycosylated. In terms of tissue distribution, while the three isoforms are present in most placental tissues, PlGF-2 is specific to early (8 week) placenta and only PlGF-1 is found in the colon and mammary carcinomas.

It is found in the secreted. In terms of biological role, growth factor active in angiogenesis and endothelial cell growth, stimulating their proliferation and migration. It binds to the receptor FLT1/VEGFR-1. Isoform PlGF-2 binds NRP1/neuropilin-1 and NRP2/neuropilin-2 in a heparin-dependent manner. Also promotes cell tumor growth. In Homo sapiens (Human), this protein is Placenta growth factor (PGF).